We begin with the raw amino-acid sequence, 311 residues long: MSVVNNRVALKHLVSMEHLTNEEVLGLISRGSEYKAGKVAIKDNSRHFAANLFFENSTRTHKSFEVAENKLGLRVLDFNADTSAVNKGETLYDTVLTMSALGTEICVIRHPEDDYYQQLIDSPTITASIVNGGDGSGQHPSQCLLDLLTIYEEFGHFDGLKIAIAGDLTHSRVAKSNMQILKRLGAELYFYGPEQWYSSEFDSYGRYMAIDHIIDQLDVLMLLRVQHERHDGSQSFSKEDYHRQFGLTEERYRRLKDSAIIMHPAPVNRDVEIADHLVEAPKARIVAQMANGVFVRMAIIEAILNGRNDKV.

2 residues coordinate carbamoyl phosphate: Arg59 and Thr60. An L-aspartate-binding site is contributed by Lys87. Arg109, His139, and Gln142 together coordinate carbamoyl phosphate. 2 residues coordinate L-aspartate: Arg172 and Arg224. Residues Ala265 and Pro266 each coordinate carbamoyl phosphate.

This sequence belongs to the aspartate/ornithine carbamoyltransferase superfamily. ATCase family. In terms of assembly, heterododecamer (2C3:3R2) of six catalytic PyrB chains organized as two trimers (C3), and six regulatory PyrI chains organized as three dimers (R2).

It carries out the reaction carbamoyl phosphate + L-aspartate = N-carbamoyl-L-aspartate + phosphate + H(+). It participates in pyrimidine metabolism; UMP biosynthesis via de novo pathway; (S)-dihydroorotate from bicarbonate: step 2/3. In terms of biological role, catalyzes the condensation of carbamoyl phosphate and aspartate to form carbamoyl aspartate and inorganic phosphate, the committed step in the de novo pyrimidine nucleotide biosynthesis pathway. This Streptococcus equi subsp. equi (strain 4047) protein is Aspartate carbamoyltransferase catalytic subunit.